The primary structure comprises 490 residues: uncharacterized protein (490 aa).

Positions 370–385 are enriched in low complexity; the sequence is FSMKRPSSSSSSLSGS. Positions 370–406 are disordered; sequence FSMKRPSSSSSSLSGSWHGDTENSVKQSLASPSEASL. The span at 391–406 shows a compositional bias: polar residues; the sequence is ENSVKQSLASPSEASL.

Its subcellular location is the cytoplasm. It is found in the nucleus. This is an uncharacterized protein from Schizosaccharomyces pombe (strain 972 / ATCC 24843) (Fission yeast).